The sequence spans 434 residues: ATP-dependent protease ATPase subunit HslU (434 aa).

ATP-binding positions include Ile18, 60–65 (GVGKTE), Asp247, Glu312, and Arg384.

The protein belongs to the ClpX chaperone family. HslU subfamily. In terms of assembly, a double ring-shaped homohexamer of HslV is capped on each side by a ring-shaped HslU homohexamer. The assembly of the HslU/HslV complex is dependent on binding of ATP.

The protein resides in the cytoplasm. Its function is as follows. ATPase subunit of a proteasome-like degradation complex; this subunit has chaperone activity. The binding of ATP and its subsequent hydrolysis by HslU are essential for unfolding of protein substrates subsequently hydrolyzed by HslV. HslU recognizes the N-terminal part of its protein substrates and unfolds these before they are guided to HslV for hydrolysis. This chain is ATP-dependent protease ATPase subunit HslU, found in Sinorhizobium fredii (strain NBRC 101917 / NGR234).